A 194-amino-acid polypeptide reads, in one-letter code: MRFTENFERAKKEALISLEIALRRGEVDEDIIPLLKKINEKPNYFTTSSCSGRISIMEMPDFGDKVNAKWLGKWHREVSLDEVLEAIRKHREGQLWLLVRSPILHVGARTLEDGIKLLNLGVSCGFKYSNIKSISDRKLIVEIRSTERLDALLGENGEILVSDDYMRKLVEIANAQVRRFKRKLKRFEERIEEL.

This sequence belongs to the TYW3 family.

The enzyme catalyses 4-demethyl-7-[(3S)-3-amino-3-carboxypropyl]wyosine(37) in tRNA(Phe) + S-adenosyl-L-methionine = 7-[(3S)-3-amino-3-carboxypropyl]wyosine(37) in tRNA(Phe) + S-adenosyl-L-homocysteine + H(+). S-adenosyl-L-methionine-dependent methyltransferase that acts as a component of the wyosine derivatives biosynthesis pathway. Probably methylates N-4 position of wybutosine-86 to produce wybutosine-72. The polypeptide is tRNA(Phe) 7-((3-amino-3-carboxypropyl)-4-demethylwyosine(37)-N(4))-methyltransferase 1 (Pyrococcus abyssi (strain GE5 / Orsay)).